The primary structure comprises 81 residues: Relaxin-like protein AGF (81 aa).

3 disulfides stabilise this stretch: C14–C66, C26–C79, and C65–C70. N37 carries an N-linked (GlcNAc...) asparagine glycan.

It belongs to the insulin family. Heterodimer of a B chain and an A chain linked by two disulfide bonds.

Its subcellular location is the secreted. Its function is as follows. Uncertain. The polypeptide is Relaxin-like protein AGF (Hypanus sabinus (Atlantic stingray)).